The chain runs to 772 residues: Chondroitin sulfate glucuronyltransferase (772 aa).

Over M1–L6 the chain is Cytoplasmic. A helical; Signal-anchor for type II membrane protein transmembrane segment spans residues L7–L29. Residues R30–T772 lie on the Lumenal side of the membrane. N-linked (GlcNAc...) asparagine glycosylation is found at N121 and N342. The disordered stretch occupies residues A629–G662. Over residues R634–A652 the composition is skewed to pro residues.

Belongs to the chondroitin N-acetylgalactosaminyltransferase family. In terms of tissue distribution, ubiquitous. Highly expressed in placenta, small intestine and pancreas.

It localises to the golgi apparatus. The protein resides in the golgi stack membrane. It catalyses the reaction 3-O-(beta-D-GalNAc-(1-&gt;4)-beta-D-GlcA-(1-&gt;3)-beta-D-Gal-(1-&gt;3)-beta-D-Gal-(1-&gt;4)-beta-D-Xyl)-L-seryl-[protein] + UDP-alpha-D-glucuronate = 3-O-(beta-D-GlcA-(1-&gt;3)-beta-D-GalNAc-(1-&gt;4)-beta-D-GlcA-(1-&gt;3)-beta-D-Gal-(1-&gt;3)-beta-D-Gal-(1-&gt;4)-beta-D-Xyl)-L-seryl-[protein] + UDP + H(+). The enzyme catalyses 3-O-{[beta-D-GalNAc-(1-&gt;4)-beta-D-GlcA-(1-&gt;3)](n)-beta-D-GalNAc-(1-&gt;4)-beta-D-GlcA-(1-&gt;3)-beta-D-Gal-(1-&gt;3)-beta-D-Gal-(1-&gt;4)-beta-D-Xyl}-L-seryl-[protein] + UDP-alpha-D-glucuronate = 3-O-{beta-D-GlcA-(1-&gt;3)-[beta-D-GalNAc-(1-&gt;4)-beta-D-GlcA-(1-&gt;3)](n)-beta-D-GalNAc-(1-&gt;4)-beta-D-GlcA-(1-&gt;3)-beta-D-Gal-(1-&gt;3)-beta-D-Gal-(1-&gt;4)-beta-D-Xyl}-L-seryl-[protein] + UDP + H(+). Its function is as follows. Transfers glucuronic acid (GlcUA) from UDP-GlcUA to N-acetylgalactosamine residues on the non-reducing end of the elongating chondroitin polymer. Has no N-acetylgalactosaminyltransferase activity. In Homo sapiens (Human), this protein is Chondroitin sulfate glucuronyltransferase (CHPF2).